Reading from the N-terminus, the 202-residue chain is Amelogenin (202 aa).

S16 is subject to Phosphoserine. A disordered region spans residues 77 to 202 (QPAPPQQPVM…TDKTKREEVD (126 aa)). Residues 78 to 87 (PAPPQQPVMP) show a composition bias toward pro residues. The span at 101–112 (QPNLPQPGQQPY) shows a compositional bias: low complexity. Positions 113-125 (QPQPAQQPQPHQP) are enriched in pro residues. The span at 126-158 (IQPIQPIQPIQPMQPMQPMQPMQPMQPMQPQTP) shows a compositional bias: low complexity. The span at 164–176 (PLPPQPPLPPMFP) shows a compositional bias: pro residues.

It belongs to the amelogenin family.

It localises to the secreted. The protein localises to the extracellular space. The protein resides in the extracellular matrix. In terms of biological role, plays a role in the biomineralization of teeth. Seems to regulate the formation of crystallites during the secretory stage of tooth enamel development. Thought to play a major role in the structural organization and mineralization of developing enamel. In Monodelphis domestica (Gray short-tailed opossum), this protein is Amelogenin (AMEL).